We begin with the raw amino-acid sequence, 394 residues long: Chorismate synthase (394 aa).

Positions 42 and 48 each coordinate NADP(+). FMN-binding positions include 137 to 139 (RAS), 258 to 259 (QA), Gly-302, 317 to 321 (KPIAT), and Arg-343.

The protein belongs to the chorismate synthase family. Homotetramer. Requires FMNH2 as cofactor.

The catalysed reaction is 5-O-(1-carboxyvinyl)-3-phosphoshikimate = chorismate + phosphate. It participates in metabolic intermediate biosynthesis; chorismate biosynthesis; chorismate from D-erythrose 4-phosphate and phosphoenolpyruvate: step 7/7. In terms of biological role, catalyzes the anti-1,4-elimination of the C-3 phosphate and the C-6 proR hydrogen from 5-enolpyruvylshikimate-3-phosphate (EPSP) to yield chorismate, which is the branch point compound that serves as the starting substrate for the three terminal pathways of aromatic amino acid biosynthesis. This reaction introduces a second double bond into the aromatic ring system. In Streptomyces coelicolor (strain ATCC BAA-471 / A3(2) / M145), this protein is Chorismate synthase.